The sequence spans 357 residues: Alanine racemase, catabolic (357 aa).

The Proton acceptor; specific for D-alanine role is filled by Lys33. Lys33 is subject to N6-(pyridoxal phosphate)lysine. Arg129 is a substrate binding site. Catalysis depends on Tyr253, which acts as the Proton acceptor; specific for L-alanine. Residue Met301 participates in substrate binding.

This sequence belongs to the alanine racemase family. It depends on pyridoxal 5'-phosphate as a cofactor.

It catalyses the reaction L-alanine = D-alanine. It functions in the pathway amino-acid biosynthesis; D-alanine biosynthesis; D-alanine from L-alanine: step 1/1. Isomerizes L-alanine to D-alanine which is then likely oxidized to pyruvate by DadA. Shows racemase activity with both alanine stereoisomers, negligible activity with D-cysteine and L-serine, and exhibits no activity with the remaining natural chiral amino acids. In Pseudomonas putida (strain ATCC 47054 / DSM 6125 / CFBP 8728 / NCIMB 11950 / KT2440), this protein is Alanine racemase, catabolic.